The chain runs to 99 residues: HssA/B-like protein 41 (99 aa).

The tract at residues 1–29 is disordered; the sequence is MTLFSSISSISNPMTSSKSSISSFGSGTS.

This sequence belongs to the hssA/B family.

In Dictyostelium discoideum (Social amoeba), this protein is HssA/B-like protein 41 (hssl41).